An 858-amino-acid polypeptide reads, in one-letter code: Ubiquitin carboxyl-terminal hydrolase 5 (858 aa).

A2 bears the N-acetylalanine mark. The segment at 73–98 (LRRTRRPKEEDTSAGTGDPPRKKPTR) is disordered. Residue K113 forms a Glycyl lysine isopeptide (Lys-Gly) (interchain with G-Cter in SUMO) linkage. Residues S149 and S156 each carry the phosphoserine modification. The UBP-type; degenerate zinc finger occupies 175 to 283 (QVSKHAFNLK…EHLSHFGIDM (109 aa)). A disulfide bridge links C195 with C816. Zn(2+)-binding residues include C199 and C202. W209 is a substrate binding site. C219 provides a ligand contact to Zn(2+). 221–224 (RRYF) serves as a coordination point for substrate. H232 provides a ligand contact to Zn(2+). 3 residues coordinate substrate: Y259, Y261, and D264. A Phosphothreonine modification is found at T292. A USP domain is found at 326–856 (TGIRNLGNSC…LGYIYFYQRV (531 aa)). The active-site Nucleophile is the C335. T623 is subject to Phosphothreonine. 2 consecutive UBA domains span residues 654 to 695 (MLDE…VMSH) and 722 to 762 (PPPE…IFSH). A phosphoserine mark is found at S779, S783, and S785. Residue H818 is the Proton acceptor of the active site.

The protein belongs to the peptidase C19 family. As to quaternary structure, homodimer. Interacts with TRIML1. SUMOylated at Lys-113; SUMOylation affects the interaction with Cav3.2 channels. In terms of processing, ubiquitinated by SMURF1; leading to proteasomal degradation.

It localises to the cytoplasm. The protein resides in the stress granule. It is found in the nucleus. The enzyme catalyses Thiol-dependent hydrolysis of ester, thioester, amide, peptide and isopeptide bonds formed by the C-terminal Gly of ubiquitin (a 76-residue protein attached to proteins as an intracellular targeting signal).. Deubiquitinating enzyme that participates in a wide range of cellular processes by specifically cleaving isopeptide bonds between ubiquitin and substrate proteins or ubiquitin itself. Affects thereby important cellular signaling pathways such as NF-kappa-B, Wnt/beta-catenin, and cytokine production by regulating ubiquitin-dependent protein degradation. Participates in the activation of the Wnt signaling pathway by promoting FOXM1 deubiquitination and stabilization that induces the recruitment of beta-catenin to Wnt target gene promoter. Regulates the assembly and disassembly of heat-induced stress granules by mediating the hydrolysis of unanchored ubiquitin chains. Promotes lipopolysaccharide-induced apoptosis and inflammatory response by stabilizing the TXNIP protein. Affects T-cell biology by stabilizing the inhibitory receptor on T-cells PDC1. Acts as a negative regulator of autophagy by regulating ULK1 at both protein and mRNA levels. Acts also as a negative regulator of type I interferon production by simultaneously removing both 'Lys-48'-linked unanchored and 'Lys-63'-linked anchored polyubiquitin chains on the transcription factor IRF3. Modulates the stability of DNA mismatch repair protein MLH1 and counteracts the effect of the ubiquitin ligase UBR4. Upon activation by insulin, it gets phosphorylated through mTORC1-mediated phosphorylation to enhance YTHDF1 stability by removing 'Lys-11'-linked polyubiquitination. May also deubiquitinate other substrates such as the calcium channel CACNA1H. The sequence is that of Ubiquitin carboxyl-terminal hydrolase 5 (Usp5) from Mus musculus (Mouse).